We begin with the raw amino-acid sequence, 355 residues long: Phosphate acyltransferase (355 aa).

Belongs to the PlsX family. As to quaternary structure, homodimer. Probably interacts with PlsY.

It localises to the cytoplasm. It carries out the reaction a fatty acyl-[ACP] + phosphate = an acyl phosphate + holo-[ACP]. It participates in lipid metabolism; phospholipid metabolism. In terms of biological role, catalyzes the reversible formation of acyl-phosphate (acyl-PO(4)) from acyl-[acyl-carrier-protein] (acyl-ACP). This enzyme utilizes acyl-ACP as fatty acyl donor, but not acyl-CoA. This chain is Phosphate acyltransferase, found in Rhodospirillum centenum (strain ATCC 51521 / SW).